A 137-amino-acid polypeptide reads, in one-letter code: Fluoride-specific ion channel FluC 2 (137 aa).

The next 4 membrane-spanning stretches (helical) occupy residues 3–23 (MGGS…SVLG), 44–64 (WGTM…GALA), 76–96 (PWLF…SFSL), and 111–131 (LGNV…GFLL). G86 and T89 together coordinate Na(+).

It belongs to the fluoride channel Fluc/FEX (TC 1.A.43) family.

The protein resides in the cell inner membrane. The catalysed reaction is fluoride(in) = fluoride(out). Na(+) is not transported, but it plays an essential structural role and its presence is essential for fluoride channel function. In terms of biological role, fluoride-specific ion channel. Important for reducing fluoride concentration in the cell, thus reducing its toxicity. In Bradyrhizobium diazoefficiens (strain JCM 10833 / BCRC 13528 / IAM 13628 / NBRC 14792 / USDA 110), this protein is Fluoride-specific ion channel FluC 2.